We begin with the raw amino-acid sequence, 519 residues long: MFLLPLPAAARVAVRQLSVRRFWGPGPDAANMTKGLVLGIYSKEKEDDAPQFTSAGENFDKLVSGKLREILNISGPPLKAGKTRTFYGLHEDFSSVVVVGLGKKGAGVDDQENWHEGKENIRAAVAAGCRQIQDLEIPSVEVDPCGDAQAAAEGAVLGLYEYDELKQKKKVVVSAKLHGSGDQEAWQRGVLFASGQNLARHLMETPANEMTPTRFAEVIEKNLKSASSKTDVHIRPKSWIEEQEMGSFLSVAKGSEEPPVFLEIHYKGSPDASDPPLVFVGKGITFDSGGISIKASANMDLMRADMGGAATICSTIVSAAKLDLPINLVGLAPLCENMPSGKANKPGDVVRAKNGKTIQVDNTDAEGRLILADALCYAHTFNPKVIINAATLTGAMDIALGSGATGVFTNSSWLWNKLFEASIETGDRVWRMPLFEHYTKQIVDCQLADVNNIGKYRSAGACTAAAFLKEFVTHPKWAHLDIAGVMTNKDEVPYLRKGMAGRPTRTLIEFLLRFSQDSA.

Position 42 is a phosphoserine (Ser42). An N6-succinyllysine modification is found at Lys45. At Ser54 the chain carries Phosphoserine. Lys61 and Lys103 each carry N6-succinyllysine. 2 positions are modified to phosphoserine: Ser180 and Ser194. Residues Leu202, Met203, and Thr205 each coordinate Zn(2+). Lys221 carries the post-translational modification N6-acetyllysine; alternate. Position 221 is an N6-succinyllysine; alternate (Lys221). Ser238 is subject to Phosphoserine. Zn(2+)-binding residues include Lys282 and Asp287. Substrate contacts are provided by Lys282, Asp287, Ser292, and Lys294. Mg(2+) is bound at residue Asp287. Lys294 is a catalytic residue. Residues Arg303, Asp305, Asp364, and Glu366 each coordinate Zn(2+). Substrate contacts are provided by Asp305 and Asp364. Mg(2+) is bound by residues Asp364 and Glu366. Arg368 is an active-site residue. Lys455 carries the N6-acetyllysine; alternate modification. Lys455 carries the N6-succinyllysine; alternate modification. An N6-succinyllysine modification is found at Lys476. At Lys489 the chain carries N6-acetyllysine; alternate. Lys489 is modified (N6-succinyllysine; alternate).

Belongs to the peptidase M17 family. Homohexamer. The cofactor is Zn(2+). Mn(2+) serves as cofactor.

Its subcellular location is the cytoplasm. The catalysed reaction is Release of an N-terminal amino acid, Xaa-|-Yaa-, in which Xaa is preferably Leu, but may be other amino acids including Pro although not Arg or Lys, and Yaa may be Pro. Amino acid amides and methyl esters are also readily hydrolyzed, but rates on arylamides are exceedingly low.. The enzyme catalyses an S-substituted L-cysteinylglycine + H2O = an S-substituted L-cysteine + glycine. It carries out the reaction L-cysteinylglycine + H2O = L-cysteine + glycine. It catalyses the reaction S-benzyl-L-cysteinylglycine + H2O = S-benzyl-L-cysteine + glycine. The catalysed reaction is Release of N-terminal proline from a peptide.. Cytosolic metallopeptidase that catalyzes the removal of unsubstituted N-terminal hydrophobic amino acids from various peptides. The presence of Zn(2+) ions is essential for the peptidase activity, and the association with other cofactors can modulate the substrate spectificity of the enzyme. For instance, in the presence of Mn(2+), it displays a specific Cys-Gly hydrolyzing activity of Cys-Gly-S-conjugates. Involved in the metabolism of glutathione and in the degradation of glutathione S-conjugates, which may play a role in the control of the cell redox status. The protein is Cytosol aminopeptidase of Sus scrofa (Pig).